Reading from the N-terminus, the 209-residue chain is FAS-associated death domain protein (209 aa).

Residues 3–81 (PFLVLLHSVS…RKDLLLRLDD (79 aa)) form the DED domain. Residues 97 to 181 (LRAAMEIICD…VVADLIEEDQ (85 aa)) form the Death domain. Residues 187–200 (QSGSANPGSFTAWD) are compositionally biased toward polar residues. The segment at 187 to 209 (QSGSANPGSFTAWDSGSAAPGAS) is disordered.

As to quaternary structure, can self-associate. Component of the AIM2 PANoptosome complex, a multiprotein complex that drives inflammatory cell death (PANoptosis). Component of the death-induced signaling complex (DISC) composed of cell surface receptor FAS/CD95 or TNFRSF1A, adapter protein FADD and the CASP8 protease; recruitment of CASP8 to the complex is required for processing of CASP8 into the p18 and p10 subunits. Interacts (via death domain) with FAS (via death domain). Interacts directly (via DED domain) with NOL3 (via CARD domain); inhibits death-inducing signaling complex (DISC) assembly by inhibiting the increase in FAS-FADD binding induced by FAS activation. Interacts with CFLAR, PEA15 and MBD4. When phosphorylated, part of a complex containing HIPK3 and FAS. May interact with MAVS/IPS1. Interacts with MOCV v-CFLAR protein and PIDD1. Interacts with RIPK1 and TRADD. Interacts with stimulated TNFRSF10B. Interacts with DDX24. Post-translationally, phosphorylated.

Its subcellular location is the cytoplasm. Apoptotic adapter molecule that recruits caspases CASP8 or CASP10 to the activated FAS/CD95 or TNFRSF1A/TNFR-1 receptors. The resulting aggregate called the death-inducing signaling complex (DISC) performs CASP8 proteolytic activation. Active CASP8 initiates the subsequent cascade of caspases mediating apoptosis. Involved in interferon-mediated antiviral immune response, playing a role in the positive regulation of interferon signaling. The chain is FAS-associated death domain protein from Bos taurus (Bovine).